The primary structure comprises 223 residues: GTP cyclohydrolase 1 (223 aa).

The Zn(2+) site is built by C114, H117, and C185.

It belongs to the GTP cyclohydrolase I family. In terms of assembly, homomer.

It carries out the reaction GTP + H2O = 7,8-dihydroneopterin 3'-triphosphate + formate + H(+). It participates in cofactor biosynthesis; 7,8-dihydroneopterin triphosphate biosynthesis; 7,8-dihydroneopterin triphosphate from GTP: step 1/1. The sequence is that of GTP cyclohydrolase 1 from Chlorobium chlorochromatii (strain CaD3).